Consider the following 513-residue polypeptide: ATP synthase subunit alpha (513 aa).

An ATP-binding site is contributed by 169 to 176 (GDRQTGKT).

It belongs to the ATPase alpha/beta chains family. As to quaternary structure, F-type ATPases have 2 components, CF(1) - the catalytic core - and CF(0) - the membrane proton channel. CF(1) has five subunits: alpha(3), beta(3), gamma(1), delta(1), epsilon(1). CF(0) has three main subunits: a(1), b(2) and c(9-12). The alpha and beta chains form an alternating ring which encloses part of the gamma chain. CF(1) is attached to CF(0) by a central stalk formed by the gamma and epsilon chains, while a peripheral stalk is formed by the delta and b chains.

Its subcellular location is the cell inner membrane. It catalyses the reaction ATP + H2O + 4 H(+)(in) = ADP + phosphate + 5 H(+)(out). Its function is as follows. Produces ATP from ADP in the presence of a proton gradient across the membrane. The alpha chain is a regulatory subunit. This Glaesserella parasuis serovar 5 (strain SH0165) (Haemophilus parasuis) protein is ATP synthase subunit alpha.